Consider the following 81-residue polypeptide: ATP synthase subunit c (81 aa).

2 helical membrane-spanning segments follow: residues 3–23 (PLIA…GAIG) and 57–77 (LAFM…LLFA).

This sequence belongs to the ATPase C chain family. In terms of assembly, F-type ATPases have 2 components, F(1) - the catalytic core - and F(0) - the membrane proton channel. F(1) has five subunits: alpha(3), beta(3), gamma(1), delta(1), epsilon(1). F(0) has four main subunits: a(1), b(1), b'(1) and c(10-14). The alpha and beta chains form an alternating ring which encloses part of the gamma chain. F(1) is attached to F(0) by a central stalk formed by the gamma and epsilon chains, while a peripheral stalk is formed by the delta, b and b' chains.

It localises to the cellular thylakoid membrane. In terms of biological role, f(1)F(0) ATP synthase produces ATP from ADP in the presence of a proton or sodium gradient. F-type ATPases consist of two structural domains, F(1) containing the extramembraneous catalytic core and F(0) containing the membrane proton channel, linked together by a central stalk and a peripheral stalk. During catalysis, ATP synthesis in the catalytic domain of F(1) is coupled via a rotary mechanism of the central stalk subunits to proton translocation. Its function is as follows. Key component of the F(0) channel; it plays a direct role in translocation across the membrane. A homomeric c-ring of between 10-14 subunits forms the central stalk rotor element with the F(1) delta and epsilon subunits. The chain is ATP synthase subunit c from Trichodesmium erythraeum (strain IMS101).